Consider the following 313-residue polypeptide: Porphobilinogen deaminase 2 (313 aa).

The residue at position 246 (Cys246) is an S-(dipyrrolylmethanemethyl)cysteine.

It belongs to the HMBS family. As to quaternary structure, monomer. It depends on dipyrromethane as a cofactor.

The catalysed reaction is 4 porphobilinogen + H2O = hydroxymethylbilane + 4 NH4(+). It functions in the pathway porphyrin-containing compound metabolism; protoporphyrin-IX biosynthesis; coproporphyrinogen-III from 5-aminolevulinate: step 2/4. Tetrapolymerization of the monopyrrole PBG into the hydroxymethylbilane pre-uroporphyrinogen in several discrete steps. The sequence is that of Porphobilinogen deaminase 2 (hemC2) from Streptomyces coelicolor (strain ATCC BAA-471 / A3(2) / M145).